The sequence spans 288 residues: Protease HtpX homolog (288 aa).

The next 2 helical transmembrane spans lie at 1–21 (MHTIKTVLLLGVLTGLFLLAG) and 23–43 (IIGGQTGMIIAFFFAMAMNFF). Position 130 (His-130) interacts with Zn(2+). Residue Glu-131 is part of the active site. His-134 provides a ligand contact to Zn(2+). 2 helical membrane passes run 140 to 160 (ILISSIAATIGGAISMLAEMA) and 175 to 195 (IGGLIGSLLLFILAPIAAMII). Glu-204 contacts Zn(2+).

The protein belongs to the peptidase M48B family. Zn(2+) serves as cofactor.

Its subcellular location is the cell inner membrane. This is Protease HtpX homolog from Persephonella marina (strain DSM 14350 / EX-H1).